Here is a 465-residue protein sequence, read N- to C-terminus: FAD-dependent monooxygenase penM (465 aa).

The helical transmembrane segment at 5–25 threads the bilayer; sequence QFHVIIVGGSIAGLTLAHCLH. Residues Glu-35, Gly-49, Arg-108, Asp-299, and Ala-312 each contribute to the FAD site. A helical transmembrane segment spans residues 435-455; the sequence is VLVLLLSALTWSCLGNMNIIM.

It belongs to the paxM FAD-dependent monooxygenase family. FAD serves as cofactor.

The protein resides in the membrane. It functions in the pathway secondary metabolite biosynthesis. FAD-dependent monooxygenase; part of the gene cluster that mediates the biosynthesis of the indole diterpenes penitrems. The geranylgeranyl diphosphate (GGPP) synthase penG catalyzes the first step in penitrem biosynthesis via conversion of farnesyl pyrophosphate and isopentyl pyrophosphate into geranylgeranyl pyrophosphate (GGPP). Condensation of indole-3-glycerol phosphate with GGPP by the prenyl transferase penC then forms 3-geranylgeranylindole (3-GGI). Epoxidation by the FAD-dependent monooxygenase penM leads to a epoxidized-GGI that is substrate of the terpene cyclase penB for cyclization to yield paspaline. Paspaline is subsequently converted to 13-desoxypaxilline by the cytochrome P450 monooxygenase penP, the latter being then converted to paxilline by the cytochrome P450 monooxygenase penQ. Paxilline is converted to beta-paxitriol via C-10 ketoreduction by the short-chain dehydrogenase PC-15 which can be monoprenylated at the C-20 by the indole diterpene prenyltransferase penD. A two-step elimination (acetylation and elimination) process performed by the O-acetyltransferase PC-16 and the P.simplicissimum ptmI-ortholog not yet identified in P.crustosum, leads to the production of the prenylated form of penijanthine. The FAD-linked oxidoreductase ptmO then converts the prenylated form of penijanthine into PC-M5 which is in turn transformed into PC-M4 by the aromatic dimethylallyltransferase PC-22. A series of oxidation steps involving 4 cytochrome P450 monooxygenases (PC-21, PC-05, PC-23, PC-20) and a FAD-dependent monooxygenase (PC-14) are required for the transformation of PC-M4 to penitrems A and E. Synthesis of these final products is proposed to proceed via penitrems D and C (PC-21, PC-05, PC-14) and penitrems B and F (PC-21, PC-05, PC-14, PC-23). The polypeptide is FAD-dependent monooxygenase penM (Penicillium crustosum (Blue mold fungus)).